A 246-amino-acid polypeptide reads, in one-letter code: Pyridoxine 5'-phosphate synthase (246 aa).

Position 6 (Asn6) interacts with 3-amino-2-oxopropyl phosphate. 8-9 (DH) is a 1-deoxy-D-xylulose 5-phosphate binding site. Arg17 contacts 3-amino-2-oxopropyl phosphate. The active-site Proton acceptor is the His49. 1-deoxy-D-xylulose 5-phosphate contacts are provided by Arg51 and His56. The Proton acceptor role is filled by Glu76. Residue Thr106 coordinates 1-deoxy-D-xylulose 5-phosphate. Catalysis depends on His196, which acts as the Proton donor. 3-amino-2-oxopropyl phosphate is bound by residues Gly197 and 219-220 (GH).

Belongs to the PNP synthase family. In terms of assembly, homooctamer; tetramer of dimers.

Its subcellular location is the cytoplasm. It catalyses the reaction 3-amino-2-oxopropyl phosphate + 1-deoxy-D-xylulose 5-phosphate = pyridoxine 5'-phosphate + phosphate + 2 H2O + H(+). It functions in the pathway cofactor biosynthesis; pyridoxine 5'-phosphate biosynthesis; pyridoxine 5'-phosphate from D-erythrose 4-phosphate: step 5/5. In terms of biological role, catalyzes the complicated ring closure reaction between the two acyclic compounds 1-deoxy-D-xylulose-5-phosphate (DXP) and 3-amino-2-oxopropyl phosphate (1-amino-acetone-3-phosphate or AAP) to form pyridoxine 5'-phosphate (PNP) and inorganic phosphate. This chain is Pyridoxine 5'-phosphate synthase, found in Akkermansia muciniphila (strain ATCC BAA-835 / DSM 22959 / JCM 33894 / BCRC 81048 / CCUG 64013 / CIP 107961 / Muc).